Consider the following 306-residue polypeptide: Large ribosomal subunit protein mL45 (306 aa).

Residues 287-306 (LKPEEEYEEAQGEAQKPQLA) are disordered.

The protein belongs to the mitochondrion-specific ribosomal protein mL45 family. In terms of assembly, component of the mitochondrial large ribosomal subunit (mt-LSU). Mature mammalian 55S mitochondrial ribosomes consist of a small (28S) and a large (39S) subunit. The 28S small subunit contains a 12S ribosomal RNA (12S mt-rRNA) and 30 different proteins. The 39S large subunit contains a 16S rRNA (16S mt-rRNA), a copy of mitochondrial valine transfer RNA (mt-tRNA(Val)), which plays an integral structural role, and 52 different proteins.

Its subcellular location is the mitochondrion. In terms of biological role, component of the mitochondrial large ribosomal subunit (mt-LSU). Within the mitochondrial ribosomes, required to direct the nascent polypeptide toward the tunnel exit and position the exit at a distance from the membrane surface. This Homo sapiens (Human) protein is Large ribosomal subunit protein mL45.